The chain runs to 281 residues: Shikimate dehydrogenase (NADP(+)) (281 aa).

Shikimate contacts are provided by residues 14-16 (SRS) and threonine 61. The active-site Proton acceptor is lysine 65. The shikimate site is built by asparagine 86 and aspartate 101. Residues 127 to 131 (GAGGA), 151 to 156 (NRTLAR), and valine 216 each bind NADP(+). Tyrosine 218 provides a ligand contact to shikimate. Glycine 239 serves as a coordination point for NADP(+).

This sequence belongs to the shikimate dehydrogenase family. Homodimer.

The catalysed reaction is shikimate + NADP(+) = 3-dehydroshikimate + NADPH + H(+). It participates in metabolic intermediate biosynthesis; chorismate biosynthesis; chorismate from D-erythrose 4-phosphate and phosphoenolpyruvate: step 4/7. Functionally, involved in the biosynthesis of the chorismate, which leads to the biosynthesis of aromatic amino acids. Catalyzes the reversible NADPH linked reduction of 3-dehydroshikimate (DHSA) to yield shikimate (SA). The sequence is that of Shikimate dehydrogenase (NADP(+)) from Azorhizobium caulinodans (strain ATCC 43989 / DSM 5975 / JCM 20966 / LMG 6465 / NBRC 14845 / NCIMB 13405 / ORS 571).